The chain runs to 444 residues: Argininosuccinate synthase (444 aa).

ATP-binding positions include 18–26 (AFSGGLDTS) and A44. Residue Y100 coordinates L-citrulline. G130 and T132 together coordinate ATP. L-aspartate-binding residues include T132, N136, and D137. N136 contributes to the L-citrulline binding site. ATP is bound at residue D137. L-citrulline is bound by residues R140 and S193. D195 lines the ATP pocket. L-citrulline contacts are provided by T202, E204, and E281.

This sequence belongs to the argininosuccinate synthase family. Type 2 subfamily. Homotetramer.

It localises to the cytoplasm. It carries out the reaction L-citrulline + L-aspartate + ATP = 2-(N(omega)-L-arginino)succinate + AMP + diphosphate + H(+). Its pathway is amino-acid biosynthesis; L-arginine biosynthesis; L-arginine from L-ornithine and carbamoyl phosphate: step 2/3. This chain is Argininosuccinate synthase, found in Haemophilus influenzae (strain PittGG).